The following is a 518-amino-acid chain: Sensor protein kinase HptS (518 aa).

2 helical membrane-spanning segments follow: residues 20–40 (IFPV…IYIW) and 222–242 (GITL…FGFI). A Histidine kinase domain is found at 297-513 (EQLIHSIEHT…LICYKIPLSR (217 aa)). Position 325 is a phosphohistidine; by autocatalysis (His325).

Post-translationally, autophosphorylated.

It is found in the cell membrane. It carries out the reaction ATP + protein L-histidine = ADP + protein N-phospho-L-histidine.. Member of the two-component regulatory system HptS/HptR that regulates genes involved in hexose phosphate transport system in response to changes in extracellular phosphate sources. May act as a sensor protein kinase which is autophosphorylated at a histidine residue and transfers its phosphate group to the conserved aspartic acid residue in the regulatory domain of HptS. In turn, HptS antagonizes CcpA-dependent transcription of a subset of CcpA-regulated genes involved in antibiotic susceptibility. This is Sensor protein kinase HptS (hptS) from Staphylococcus aureus (strain MRSA252).